The primary structure comprises 261 residues: 5'-nucleotidase SurE (261 aa).

Residues Asp-10, Asp-11, Ser-41, and Asn-96 each coordinate a divalent metal cation.

It belongs to the SurE nucleotidase family. A divalent metal cation serves as cofactor.

The protein localises to the cytoplasm. It carries out the reaction a ribonucleoside 5'-phosphate + H2O = a ribonucleoside + phosphate. Its function is as follows. Nucleotidase that shows phosphatase activity on nucleoside 5'-monophosphates. The sequence is that of 5'-nucleotidase SurE from Methanococcoides burtonii (strain DSM 6242 / NBRC 107633 / OCM 468 / ACE-M).